A 146-amino-acid polypeptide reads, in one-letter code: Leptin (146 aa).

A disulfide bond links Cys-96 and Cys-146.

It belongs to the leptin family.

The protein localises to the secreted. Key player in the regulation of energy balance and body weight control. Once released into the circulation, has central and peripheral effects by binding LEPR, found in many tissues, which results in the activation of several major signaling pathways. In the hypothalamus, acts as an appetite-regulating factor that induces a decrease in food intake and an increase in energy consumption by inducing anorexinogenic factors and suppressing orexigenic neuropeptides, also regulates bone mass and secretion of hypothalamo-pituitary-adrenal hormones. In the periphery, increases basal metabolism, influences reproductive function, regulates pancreatic beta-cell function and insulin secretion, is pro-angiogenic for endothelial cell and affects innate and adaptive immunity. In the arcuate nucleus of the hypothalamus, activates by depolarization POMC neurons inducing FOS and SOCS3 expression to release anorexigenic peptides and inhibits by hyperpolarization NPY neurons inducing SOCS3 with a consequent reduction on release of orexigenic peptides. In addition to its known satiety inducing effect, has a modulatory role in nutrient absorption. In the intestine, reduces glucose absorption by enterocytes by activating PKC and leading to a sequential activation of p38, PI3K and ERK signaling pathways which exerts an inhibitory effect on glucose absorption. Acts as a growth factor on certain tissues, through the activation of different signaling pathways increases expression of genes involved in cell cycle regulation such as CCND1, via JAK2-STAT3 pathway, or VEGFA, via MAPK1/3 and PI3K-AKT1 pathways. May also play an apoptotic role via JAK2-STAT3 pathway and up-regulation of BIRC5 expression. Pro-angiogenic, has mitogenic activity on vascular endothelial cells and plays a role in matrix remodeling by regulating the expression of matrix metalloproteinases (MMPs) and tissue inhibitors of metalloproteinases (TIMPs). In innate immunity, modulates the activity and function of neutrophils by increasing chemotaxis and the secretion of oxygen radicals. Increases phagocytosis by macrophages and enhances secretion of pro-inflammatory mediators. Increases cytotoxic ability of NK cells. Plays a pro-inflammatory role, in synergy with IL1B, by inducing NOS2 which promotes the production of IL6, IL8 and Prostaglandin E2, through a signaling pathway that involves JAK2, PI3K, MAP2K1/MEK1 and MAPK14/p38. In adaptive immunity, promotes the switch of memory T-cells towards T helper-1 cell immune responses. Increases CD4(+)CD25(-) T-cell proliferation and reduces autophagy during TCR (T-cell receptor) stimulation, through MTOR signaling pathway activation and BCL2 up-regulation. The chain is Leptin (LEP) from Gorilla gorilla gorilla (Western lowland gorilla).